Consider the following 249-residue polypeptide: Pyridoxine 5'-phosphate synthase (249 aa).

A 3-amino-2-oxopropyl phosphate-binding site is contributed by Asn-7. 9–10 is a 1-deoxy-D-xylulose 5-phosphate binding site; the sequence is DH. Residue Arg-18 coordinates 3-amino-2-oxopropyl phosphate. His-43 functions as the Proton acceptor in the catalytic mechanism. 2 residues coordinate 1-deoxy-D-xylulose 5-phosphate: Arg-45 and His-50. Catalysis depends on Glu-70, which acts as the Proton acceptor. Thr-100 is a binding site for 1-deoxy-D-xylulose 5-phosphate. His-190 (proton donor) is an active-site residue. 3-amino-2-oxopropyl phosphate-binding positions include Gly-191 and 212–213; that span reads GH.

Belongs to the PNP synthase family. As to quaternary structure, homooctamer; tetramer of dimers.

It is found in the cytoplasm. The enzyme catalyses 3-amino-2-oxopropyl phosphate + 1-deoxy-D-xylulose 5-phosphate = pyridoxine 5'-phosphate + phosphate + 2 H2O + H(+). It functions in the pathway cofactor biosynthesis; pyridoxine 5'-phosphate biosynthesis; pyridoxine 5'-phosphate from D-erythrose 4-phosphate: step 5/5. Catalyzes the complicated ring closure reaction between the two acyclic compounds 1-deoxy-D-xylulose-5-phosphate (DXP) and 3-amino-2-oxopropyl phosphate (1-amino-acetone-3-phosphate or AAP) to form pyridoxine 5'-phosphate (PNP) and inorganic phosphate. This is Pyridoxine 5'-phosphate synthase from Synechococcus sp. (strain CC9311).